A 474-amino-acid chain; its full sequence is tRNA-2-methylthio-N(6)-dimethylallyladenosine synthase (474 aa).

The MTTase N-terminal domain occupies 3–120; the sequence is KKLLIKTWGC…LPEMIKQSQS (118 aa). Residues Cys12, Cys49, Cys83, Cys157, Cys161, and Cys164 each coordinate [4Fe-4S] cluster. In terms of domain architecture, Radical SAM core spans 143-375; the sequence is RAEGATAFVS…QQTVNTQAMR (233 aa). A TRAM domain is found at 378 to 441; the sequence is RQMLDTEQRV…ANSLRGELVR (64 aa).

The protein belongs to the methylthiotransferase family. MiaB subfamily. In terms of assembly, monomer. The cofactor is [4Fe-4S] cluster.

The protein resides in the cytoplasm. It catalyses the reaction N(6)-dimethylallyladenosine(37) in tRNA + (sulfur carrier)-SH + AH2 + 2 S-adenosyl-L-methionine = 2-methylsulfanyl-N(6)-dimethylallyladenosine(37) in tRNA + (sulfur carrier)-H + 5'-deoxyadenosine + L-methionine + A + S-adenosyl-L-homocysteine + 2 H(+). Its function is as follows. Catalyzes the methylthiolation of N6-(dimethylallyl)adenosine (i(6)A), leading to the formation of 2-methylthio-N6-(dimethylallyl)adenosine (ms(2)i(6)A) at position 37 in tRNAs that read codons beginning with uridine. This Vibrio campbellii (strain ATCC BAA-1116) protein is tRNA-2-methylthio-N(6)-dimethylallyladenosine synthase.